A 221-amino-acid chain; its full sequence is uncharacterized protein (221 aa).

Its subcellular location is the mitochondrion. This is an uncharacterized protein from Paramecium tetraurelia.